The following is a 155-amino-acid chain: Low molecular weight phosphotyrosine protein phosphatase 1 (155 aa).

Cys9 serves as the catalytic Nucleophile. The active site involves Arg15. The active-site Proton donor is Asp124.

It belongs to the low molecular weight phosphotyrosine protein phosphatase family. Cone cells and primary pigment cells in developing pupal retina.

Its subcellular location is the cytoplasm. The enzyme catalyses O-phospho-L-tyrosyl-[protein] + H2O = L-tyrosyl-[protein] + phosphate. It catalyses the reaction a phosphate monoester + H2O = an alcohol + phosphate. In terms of biological role, acts on tyrosine phosphorylated proteins, low-MW aryl phosphates and natural and synthetic acyl phosphates. The sequence is that of Low molecular weight phosphotyrosine protein phosphatase 1 (primo-1) from Drosophila melanogaster (Fruit fly).